The primary structure comprises 70 residues: UPF0337 protein BC_3635 (70 aa).

This sequence belongs to the UPF0337 (CsbD) family.

The sequence is that of UPF0337 protein BC_3635 from Bacillus cereus (strain ATCC 14579 / DSM 31 / CCUG 7414 / JCM 2152 / NBRC 15305 / NCIMB 9373 / NCTC 2599 / NRRL B-3711).